Consider the following 66-residue polypeptide: Phylloseptin-S6 (66 aa).

Residues 1–22 (MAFLKKSLFLVLFLGLVSLSIC) form the signal peptide. Positions 23-46 (EEEKRETEEEEHDQEEDDKSEEKR) are excised as a propeptide. Residues 25 to 44 (EKRETEEEEHDQEEDDKSEE) are disordered. Acidic residues predominate over residues 30–41 (EEEEHDQEEDDK). L65 carries the post-translational modification Leucine amide.

This sequence belongs to the frog skin active peptide (FSAP) family. Phylloseptin subfamily. In terms of tissue distribution, expressed by the skin glands.

It localises to the secreted. It is found in the target cell membrane. Antimicrobial peptide with high activity against Gram-positive bacteria, low activity against Gram-negative bacteria, and moderate activity against fungi. Acts by causing bacterial membrane disruption inducing leakage of the intracellular content followed by cell death. It adopts an alpha-helical amphipathic structure in membrane environments. Also shows highly potent antiparasitic activity against Leishmania species. Shows moderate hemolytic activity on human erythrocytes. Is also active on human monocytes. In Phyllomedusa sauvagei (Sauvage's leaf frog), this protein is Phylloseptin-S6.